Reading from the N-terminus, the 77-residue chain is Acyl carrier protein (77 aa).

The Carrier domain maps to 2–77 (SNIEERVKKI…AAIDYVTANQ (76 aa)). The residue at position 37 (Ser37) is an O-(pantetheine 4'-phosphoryl)serine.

Belongs to the acyl carrier protein (ACP) family. 4'-phosphopantetheine is transferred from CoA to a specific serine of apo-ACP by AcpS. This modification is essential for activity because fatty acids are bound in thioester linkage to the sulfhydryl of the prosthetic group.

It is found in the cytoplasm. Its pathway is lipid metabolism; fatty acid biosynthesis. Functionally, carrier of the growing fatty acid chain in fatty acid biosynthesis. This Colwellia psychrerythraea (strain 34H / ATCC BAA-681) (Vibrio psychroerythus) protein is Acyl carrier protein.